Consider the following 125-residue polypeptide: Alpha-endosulfine (125 aa).

Residues 1-37 (MSDKYIGDSHLEETGEEKQDSQEKEAVTPEKAEEQKL) show a composition bias toward basic and acidic residues. The tract at residues 1-53 (MSDKYIGDSHLEETGEEKQDSQEKEAVTPEKAEEQKLKAKYPNLGQKPGGSDF) is disordered. The residue at position 28 (Thr-28) is a Phosphothreonine; by CDK2. Ser-67 is modified (phosphoserine; by GWL). Positions 81–108 (QLPCAGPDKNLVTGDHIPTPQDLPQRKS) are disordered. Thr-99 is modified (phosphothreonine; by CDK2). A Phosphoserine; by PKA modification is found at Ser-109.

It belongs to the endosulfine family. Post-translationally, phosphorylation at Ser-67 by gwl during mitosis is essential for interaction with ppp2r2d (PR55-delta) and subsequent inactivation of PP2A.

Its subcellular location is the cytoplasm. Protein phosphatase inhibitor that specifically inhibits protein phosphatase 2A (PP2A) during mitosis. When phosphorylated at Ser-67 during mitosis, specifically interacts with ppp2r2d (PR55-delta) and inhibits its activity, leading to inactivation of PP2A, an essential condition to keep cyclin-B1-CDK1 activity high during M phase. This chain is Alpha-endosulfine (ensa), found in Xenopus tropicalis (Western clawed frog).